The following is a 196-amino-acid chain: MPIGVPKVPFRSPGEEDASWVDVYNRLYRERLLFLGQAVDSEISNQLIGLMIYLSIEDDTKDLYLFINSPGGWVIPGVAIYDTMQFVRPDVHTICMGLAASMGSFILVGGEITKRLAFPHARVMIHQPASSFYEAQAGEFILEAEELLKLRETLTRVYVQRTGKPLWVVSEDMERDVFMSATEAQAYGIVDLVAVE.

Catalysis depends on S101, which acts as the Nucleophile. Residue H126 is part of the active site.

The protein belongs to the peptidase S14 family. Component of the chloroplastic Clp protease core complex.

It localises to the plastid. It is found in the chloroplast stroma. It catalyses the reaction Hydrolysis of proteins to small peptides in the presence of ATP and magnesium. alpha-casein is the usual test substrate. In the absence of ATP, only oligopeptides shorter than five residues are hydrolyzed (such as succinyl-Leu-Tyr-|-NHMec, and Leu-Tyr-Leu-|-Tyr-Trp, in which cleavage of the -Tyr-|-Leu- and -Tyr-|-Trp bonds also occurs).. In terms of biological role, cleaves peptides in various proteins in a process that requires ATP hydrolysis. Has a chymotrypsin-like activity. Plays a major role in the degradation of misfolded proteins. This is ATP-dependent Clp protease proteolytic subunit from Coffea arabica (Arabian coffee).